Reading from the N-terminus, the 413-residue chain is Probable alpha-amylase 2 (413 aa).

Substrate-binding positions include 74–75 (YL) and 191–196 (RFDFAR). Aspartate 193 acts as the Nucleophile in catalysis. The active-site Proton donor is glutamate 218. Substrate contacts are provided by residues tryptophan 220, serine 222, glutamine 239, aspartate 246, lysine 280, 286 to 288 (GWW), histidine 299, glutamine 305, lysine 386, and tryptophan 411.

It belongs to the glycosyl hydrolase 13 family. Requires Ca(2+) as cofactor. Expressed in developing siliques.

It is found in the cytoplasm. The protein localises to the cytosol. It carries out the reaction Endohydrolysis of (1-&gt;4)-alpha-D-glucosidic linkages in polysaccharides containing three or more (1-&gt;4)-alpha-linked D-glucose units.. Probable alpha-amylase that does not seem to be required for breakdown of transitory starch in leaves. In Arabidopsis thaliana (Mouse-ear cress), this protein is Probable alpha-amylase 2 (AMY2).